Reading from the N-terminus, the 1129-residue chain is MSRFDSQCSSEDVNKEDECVPSSSEDSQDGVSSPMENDDEPEFSQKHYDIEPCYYSLTGKSDRNCRGIVYRYRQDSDLKGFQSHDGTLYRLRDSVFVEVSQNEPYVIAAICGFKYTKRDHVVVKLTRYFRADDIPEISLNLMKQERAELEINPHLCPQSLNRELFNSELQITQPVSCLRGKCIVEYVKDVRHARTVADFSLDNDTFFFCLHYNQDSTKLASTHYAIRVGTSFQATLPPMAECSVGDDSDRDELLYRPNSIESGEEEDYIKLARCYRTYTLSGNHMLDSQKNARSLQVSDLLMDEAIIQLHRSGYKIDDALSELNANDIILTTDVDNMTQDDAKKFAKGIKQLGKNFSRIHRELLPHHSREQLVSYYYLWKKTPEATKPKQAARRVNPTSIKRPTKEKVKASRPTSTEYLDFDSASESDVENNGPSGRACHHCYGAESKDWHHANGLLLCTDCRLHYKKYGQLRQIANRPSQVPACLFKRSNSDEEESGVRTRAGKKEQRRRTPSSMSETPDRRSPSTVSNGAPNLTAEETPTKKLNGSVKRAPKRPLHNGVINNVEKSNSSEEPASPTTPPPTLTNGLTNGHGPESSTPNGETISKRMKVEPSYDDDDDEEEGKMTIDEGDDDPMPVLNGFKKEESVEEIKLELNGTIKKENGVETDPTTPTCSMEAENEVCETPAVVSVEIRDETNGETNSDLKDDENVEPDSPEDTFELGSNVEFETKNAMFVRSIVRSCGPRCARTDLIFKIKVGGVWEKSIKEKEERKKVHLQNQRIQDSEKVAIQQNQIKKEQQQSQPTPQQIHQQQAQQNAQHLQQLQQAVMLGHLPPEVLRQMMPPQFGVDPTAILMQQMMAGQQSQGVNAAFQHQMALQQQLEAHQVQFQLMMAHQHQQKMIAEQQQQQRHAAAQQLREREQREQRERERERQHQQQAQQALHQQQQQHAAAAANQLNPAMMQMMALMANSAASQQDIARLMEMAAQQQQQQQQAAQAQAQRDQERERREREAREREAAREREREQAAREAAARDQAAREHAQAVQAAAAAAQQAQALTPDMQHMHLLQQLMLNPALMMQLQQAQAQQQQQQPQVTNPLQMLQHGMAAQSANQAEMMRRIHPEPAMRPQHQ.

Residues 1-11 (MSRFDSQCSSE) show a composition bias toward polar residues. The segment at 1 to 43 (MSRFDSQCSSEDVNKEDECVPSSSEDSQDGVSSPMENDDEPEF) is disordered. Positions 22-33 (SSSEDSQDGVSS) are enriched in low complexity. In terms of domain architecture, BAH spans 87–223 (TLYRLRDSVF…QDSTKLASTH (137 aa)). The 104-residue stretch at 224–327 (YAIRVGTSFQ…DALSELNAND (104 aa)) folds into the ELM2 domain. Positions 332-384 (TDVDNMTQDDAKKFAKGIKQLGKNFSRIHRELLPHHSREQLVSYYYLWKKTPE) constitute an SANT domain. Positions 388–434 (PKQAARRVNPTSIKRPTKEKVKASRPTSTEYLDFDSASESDVENNGP) are disordered. Positions 419-429 (LDFDSASESDV) are enriched in acidic residues. The GATA-type; atypical zinc finger occupies 439–485 (CHHCYGAESKDWHHANGLLLCTDCRLHYKKYGQLRQIANRPSQVPAC). 5 disordered regions span residues 488–636 (KRSN…DPMP), 693–717 (RDETNGETNSDLKDDENVEPDSPED), 790–814 (QQNQIKKEQQQSQPTPQQIHQQQAQ), 899–950 (MIAE…HAAA), and 982–1040 (MAAQ…REHA). Composition is skewed to polar residues over residues 525–545 (PSTVSNGAPNLTAEETPTKKL) and 561–573 (VINNVEKSNSSEE). Acidic residues-rich tracts occupy residues 613–634 (SYDDDDDEEEGKMTIDEGDDDP) and 705–717 (KDDENVEPDSPED). The segment covering 899–914 (MIAEQQQQQRHAAAQQ) has biased composition (low complexity). Positions 915-932 (LREREQREQRERERERQH) are enriched in basic and acidic residues. Low complexity-rich tracts occupy residues 933–950 (QQQAQQALHQQQQQHAAA) and 983–999 (AAQQQQQQQQAAQAQAQ). Positions 1000–1040 (RDQERERREREAREREAAREREREQAAREAAARDQAAREHA) are enriched in basic and acidic residues.

As to quaternary structure, interacts with ceh-6, sem-4 and sox-2. Interacts with wdr-5.1. Expression detected in anterior intestine and head region.

The protein localises to the nucleus. In terms of biological role, transcription factor which promotes stress survival and delays aging. Required for cell cycle progression and development of the mesodermal and endodermal embryonic lineages. Required for normal T-cell polarity, for correct migration of QL neuroblast descendants and other cells, for embryonic patterning and for the embryonic expression of hlh-8. Also required for the transdifferentiation of the Y rectal epithelial cell to the PDA motor neuron during larval development. This is Egg-laying defective protein 27 from Caenorhabditis elegans.